A 169-amino-acid polypeptide reads, in one-letter code: Myelin basic protein (169 aa).

Residue Ala-1 is modified to N-acetylalanine. The interval 1–114 (AAQKRPSQRS…GRGLSLSRFS (114 aa)) is disordered. At Ser-7 the chain carries Phosphoserine; in C5 and C6. At Ser-10 the chain carries Phosphoserine. Tyr-12 bears the Phosphotyrosine mark. Ser-17 carries the phosphoserine modification. Thr-18 is modified (phosphothreonine). A Citrulline; in form C8b modification is found at Arg-23. Residue Arg-29 is modified to Citrulline. Thr-33 carries the phosphothreonine modification. Ser-38 bears the Phosphoserine mark. At Arg-41 the chain carries Citrulline; alternate. At Arg-41 the chain carries Omega-N-methylarginine; alternate. Positions 43–87 (FGSDRGAPKRGSGKDGHHAARTTHYGSLPQKAQGHRPQDENPVVH) are induces experimental autoimmune encephalomyelitis (EAE) 1. Arg-47 carries the post-translational modification Citrulline; in form C8b. Arg-47 carries the omega-N-methylarginine modification. At Ser-54 the chain carries Phosphoserine; in C4, C5 and C6. Arg-63 carries the citrulline modification. A Phosphothreonine modification is found at Thr-65. Position 67 is a phosphotyrosine (Tyr-67). Thr-94 bears the Phosphothreonine mark. Arg-96 carries the citrulline; in form C2, C3, C8a and C8b modification. Thr-97 carries the post-translational modification Phosphothreonine; by MAPK; in C3, C4, C5 and C6. At Gln-102 the chain carries Deamidated glutamine; in form C5. At Arg-106 the chain carries Citrulline; alternate. An Omega-N-methylarginine; alternate modification is found at Arg-106. A Symmetric dimethylarginine; alternate modification is found at Arg-106. Citrulline is present on Arg-112. Ser-114 carries the phosphoserine modification. The induces experimental autoimmune encephalomyelitis (EAE) 2 stretch occupies residues 114–122 (SWGAEGQKP). Gln-120 is modified (deamidated glutamine; in form C3). Lys-121 is subject to N6-acetyllysine. Citrulline is present on Arg-129. Positions 133–169 (YKSAHKGLKGHDAQGTLSKIFKLGGRDSRSGSPMARR) are disordered. Deamidated glutamine; in form C2 is present on Gln-146. Arg-158 carries the post-translational modification Citrulline. Ser-160 carries the phosphoserine; in C4 and C6 modification. Position 161 is a citrulline; in form C3 (Arg-161). At Ser-164 the chain carries Phosphoserine; in form C3, C5 and C6. Citrulline occurs at positions 168 and 169.

The protein belongs to the myelin basic protein family. In terms of assembly, homodimer; self-associates in the presence of lysolipid. At least 6 charge isomers; C1 (the most cationic and least modified form), C2, C3, C4, C5 and C6 (the least cationic form); are produced as a result of optional post-translational modifications, such as phosphorylation of serine or threonine residues, deamidation of glutamine or asparagine residues, citrullination and methylation of arginine residues. Post-translationally, phosphorylated by TAOK2, VRK2, MAPK11, MAPK12, MAPK14 and MINK1. In terms of processing, proteolytically cleaved in B cell lysosomes by cathepsin CTSG which degrades the major immunogenic MBP epitope and prevents the activation of MBP-specific autoreactive T cells. Found in both the central and the peripheral nervous system.

It localises to the myelin membrane. Its function is as follows. Is, with PLP, the most abundant protein component of the myelin membrane in the CNS. Has a role in both the formation and stabilization of this compact multilayer arrangement of bilayers. Each splice variant and charge isomer may have a specialized function in the assembly of an optimized, biochemically functional myelin membrane. The sequence is that of Myelin basic protein (MBP) from Bos taurus (Bovine).